We begin with the raw amino-acid sequence, 155 residues long: Ribonuclease H (155 aa).

The 142-residue stretch at 1-142 (MTKQVEIFTD…CDELARAAAM (142 aa)) folds into the RNase H type-1 domain. Residues D10, E48, D70, and D134 each contribute to the Mg(2+) site.

The protein belongs to the RNase H family. Monomer. The cofactor is Mg(2+).

It localises to the cytoplasm. It catalyses the reaction Endonucleolytic cleavage to 5'-phosphomonoester.. In terms of biological role, endonuclease that specifically degrades the RNA of RNA-DNA hybrids. This is Ribonuclease H from Enterobacter sp. (strain 638).